The chain runs to 279 residues: Pantothenate synthetase (279 aa).

ATP is bound at residue 26 to 33 (MGNLHEGH). The active-site Proton donor is the His33. Gln57 serves as a coordination point for (R)-pantoate. Residue Gln57 coordinates beta-alanine. 144 to 147 (GKKD) contributes to the ATP binding site. A (R)-pantoate-binding site is contributed by Gln150. ATP-binding positions include Val173 and 181-184 (LSSR).

The protein belongs to the pantothenate synthetase family. In terms of assembly, homodimer.

It is found in the cytoplasm. The catalysed reaction is (R)-pantoate + beta-alanine + ATP = (R)-pantothenate + AMP + diphosphate + H(+). It functions in the pathway cofactor biosynthesis; (R)-pantothenate biosynthesis; (R)-pantothenate from (R)-pantoate and beta-alanine: step 1/1. In terms of biological role, catalyzes the condensation of pantoate with beta-alanine in an ATP-dependent reaction via a pantoyl-adenylate intermediate. The chain is Pantothenate synthetase from Burkholderia ambifaria (strain MC40-6).